Consider the following 57-residue polypeptide: Large ribosomal subunit protein bL33 (57 aa).

This sequence belongs to the bacterial ribosomal protein bL33 family.

In Shewanella amazonensis (strain ATCC BAA-1098 / SB2B), this protein is Large ribosomal subunit protein bL33.